A 336-amino-acid polypeptide reads, in one-letter code: Mitochondrial thiamine diphosphate carrier 1 (336 aa).

6 helical membrane passes run 11–27, 88–105, 127–150, 182–199, 230–246, and 303–322; these read RRAL…GGIS, VPAL…FTVL, YLSY…FDLL, LYSG…YAGL, SVSS…AGTF, and GLFP…FVVY. Solcar repeat units lie at residues 11-111, 124-210, and 231-328; these read RRAL…LKTF, LSPY…FKRS, and VSSF…ISDW.

The protein belongs to the mitochondrial carrier (TC 2.A.29) family. As to expression, ubiquitous with highest expression in pollen.

The protein localises to the mitochondrion inner membrane. Mitochondrial transporter that mediates uptake of thiamine diphosphate (ThDP) into mitochondria. The protein is Mitochondrial thiamine diphosphate carrier 1 of Zea mays (Maize).